A 639-amino-acid polypeptide reads, in one-letter code: Phosphatidylinositol 3,4,5-trisphosphate 3-phosphatase cnrN (639 aa).

The Phosphatase tensin-type domain maps to 20–190; that stretch reads FKSKEMDLDL…NYFKEIVSGS (171 aa). The Phosphocysteine intermediate role is filled by Cys129. In terms of domain architecture, C2 tensin-type spans 195-350; it reads EFVLTFRSIE…LQMECRFQNN (156 aa). 5 disordered regions span residues 243–265, 395–429, 451–498, 519–567, and 598–628; these read INNDNSESNNNNNNNNNNNNNNN, NNILASSAPTPLTTTTTTTTTTTTTSLPSSEHSTP, SSSG…SCSS, NNNN…RKRK, and FTKKINPNNNEENVDQKTLPILKKETNDPSE. Low complexity-rich tracts occupy residues 244–265, 395–424, 458–486, and 519–554; these read NNDNSESNNNNNNNNNNNNNNN, NNILASSAPTPLTTTTTTTTTTTTTSLPSS, NSSRNSNSNSRGGSSNSSSNRSSTSSRSS, and NNNNNNNNNNNNNNNNNNNNNKNSNNNNNESSSNSN. Residues 598–608 show a composition bias toward polar residues; sequence FTKKINPNNNE. Residues 619-628 are compositionally biased toward basic and acidic residues; the sequence is LKKETNDPSE.

Requires Mg(2+) as cofactor.

It catalyses the reaction a 1,2-diacyl-sn-glycero-3-phospho-(1D-myo-inositol-3,4,5-trisphosphate) + H2O = a 1,2-diacyl-sn-glycero-3-phospho-(1D-myo-inositol-4,5-bisphosphate) + phosphate. In terms of biological role, protein phosphatase that negatively regulates PI3K-dependent pathways. Regulates cAMP signal transduction to control territory size. During development, a lawn of Dictyostelium cells breaks up into territories where cells aggregate in dendritic streams to form groups of 20'000 cells. In Dictyostelium discoideum (Social amoeba), this protein is Phosphatidylinositol 3,4,5-trisphosphate 3-phosphatase cnrN (cnrN).